We begin with the raw amino-acid sequence, 252 residues long: 3-deoxy-manno-octulosonate cytidylyltransferase (252 aa).

This sequence belongs to the KdsB family.

The protein resides in the cytoplasm. The catalysed reaction is 3-deoxy-alpha-D-manno-oct-2-ulosonate + CTP = CMP-3-deoxy-beta-D-manno-octulosonate + diphosphate. It participates in nucleotide-sugar biosynthesis; CMP-3-deoxy-D-manno-octulosonate biosynthesis; CMP-3-deoxy-D-manno-octulosonate from 3-deoxy-D-manno-octulosonate and CTP: step 1/1. The protein operates within bacterial outer membrane biogenesis; lipopolysaccharide biosynthesis. Functionally, activates KDO (a required 8-carbon sugar) for incorporation into bacterial lipopolysaccharide in Gram-negative bacteria. The chain is 3-deoxy-manno-octulosonate cytidylyltransferase from Trichlorobacter lovleyi (strain ATCC BAA-1151 / DSM 17278 / SZ) (Geobacter lovleyi).